Reading from the N-terminus, the 184-residue chain is Translation initiation factor IF-3 (184 aa).

It belongs to the IF-3 family. In terms of assembly, monomer.

It localises to the cytoplasm. Functionally, IF-3 binds to the 30S ribosomal subunit and shifts the equilibrium between 70S ribosomes and their 50S and 30S subunits in favor of the free subunits, thus enhancing the availability of 30S subunits on which protein synthesis initiation begins. The polypeptide is Translation initiation factor IF-3 (Hamiltonella defensa subsp. Acyrthosiphon pisum (strain 5AT)).